The following is a 456-amino-acid chain: Adenylosuccinate synthetase (456 aa).

GTP contacts are provided by residues 11–17 and 39–41; these read GDEGKGG and GHT. Aspartate 12 (proton acceptor) is an active-site residue. The Mg(2+) site is built by aspartate 12 and glycine 39. IMP-binding positions include 12 to 15, 37 to 40, threonine 127, arginine 141, glutamine 232, threonine 247, and arginine 328; these read DEGK and NAGH. Histidine 40 serves as the catalytic Proton donor. 324–330 provides a ligand contact to substrate; that stretch reads TVTGRPR. GTP-binding positions include arginine 330, 356-358, and 441-443; these read HLD and GVG.

It belongs to the adenylosuccinate synthetase family. Homodimer. The cofactor is Mg(2+).

It is found in the cytoplasm. It carries out the reaction IMP + L-aspartate + GTP = N(6)-(1,2-dicarboxyethyl)-AMP + GDP + phosphate + 2 H(+). Its pathway is purine metabolism; AMP biosynthesis via de novo pathway; AMP from IMP: step 1/2. Its function is as follows. Plays an important role in the de novo pathway of purine nucleotide biosynthesis. Catalyzes the first committed step in the biosynthesis of AMP from IMP. This Natronomonas pharaonis (strain ATCC 35678 / DSM 2160 / CIP 103997 / JCM 8858 / NBRC 14720 / NCIMB 2260 / Gabara) (Halobacterium pharaonis) protein is Adenylosuccinate synthetase.